The chain runs to 90 residues: MDVLVILKVFPESDEINLTQLSEEIKKRLPEGYRLVKNETEPIAYGLKALIAYIQMPENTEGGTDKLEELVNGIEGVSHAEVVNVTRLGF.

It belongs to the EF-1-beta/EF-1-delta family.

In terms of biological role, promotes the exchange of GDP for GTP in EF-1-alpha/GDP, thus allowing the regeneration of EF-1-alpha/GTP that could then be used to form the ternary complex EF-1-alpha/GTP/AAtRNA. In Sulfolobus acidocaldarius (strain ATCC 33909 / DSM 639 / JCM 8929 / NBRC 15157 / NCIMB 11770), this protein is Elongation factor 1-beta.